The primary structure comprises 670 residues: DNA ligase (670 aa).

NAD(+)-binding positions include 34-38, 84-85, 116-119, arginine 139, glutamate 174, tyrosine 226, lysine 291, and lysine 315; these read DAEYD, SL, and EHKV. Lysine 118 (N6-AMP-lysine intermediate) is an active-site residue. Residues cysteine 409, cysteine 412, cysteine 425, and cysteine 430 each coordinate Zn(2+). Positions 586–670 constitute a BRCT domain; that stretch reads EVSDLLSGLT…LKEKGAPVPA (85 aa).

This sequence belongs to the NAD-dependent DNA ligase family. LigA subfamily. Requires Mg(2+) as cofactor.

It carries out the reaction NAD(+) + (deoxyribonucleotide)n-3'-hydroxyl + 5'-phospho-(deoxyribonucleotide)m = (deoxyribonucleotide)n+m + AMP + beta-nicotinamide D-nucleotide.. In terms of biological role, DNA ligase that catalyzes the formation of phosphodiester linkages between 5'-phosphoryl and 3'-hydroxyl groups in double-stranded DNA using NAD as a coenzyme and as the energy source for the reaction. It is essential for DNA replication and repair of damaged DNA. In Thermus filiformis, this protein is DNA ligase.